Reading from the N-terminus, the 83-residue chain is Small ribosomal subunit protein uS17 (83 aa).

It belongs to the universal ribosomal protein uS17 family. As to quaternary structure, part of the 30S ribosomal subunit.

Functionally, one of the primary rRNA binding proteins, it binds specifically to the 5'-end of 16S ribosomal RNA. This Zymomonas mobilis subsp. mobilis (strain ATCC 31821 / ZM4 / CP4) protein is Small ribosomal subunit protein uS17.